The following is a 191-amino-acid chain: Peptidyl-tRNA hydrolase (191 aa).

Tyrosine 17 contacts tRNA. Histidine 22 serves as the catalytic Proton acceptor. Residues tyrosine 68, asparagine 70, and asparagine 116 each contribute to the tRNA site.

Belongs to the PTH family. As to quaternary structure, monomer.

It is found in the cytoplasm. The catalysed reaction is an N-acyl-L-alpha-aminoacyl-tRNA + H2O = an N-acyl-L-amino acid + a tRNA + H(+). Functionally, hydrolyzes ribosome-free peptidyl-tRNAs (with 1 or more amino acids incorporated), which drop off the ribosome during protein synthesis, or as a result of ribosome stalling. In terms of biological role, catalyzes the release of premature peptidyl moieties from peptidyl-tRNA molecules trapped in stalled 50S ribosomal subunits, and thus maintains levels of free tRNAs and 50S ribosomes. The polypeptide is Peptidyl-tRNA hydrolase (Mycobacterium tuberculosis (strain ATCC 25177 / H37Ra)).